Consider the following 1125-residue polypeptide: Phytochrome A (1125 aa).

Low complexity-rich tracts occupy residues 1–14 (MSSSRPSHSSSNSA) and 39–48 (SGSSFDYSSS). 2 disordered regions span residues 1–22 (MSSSRPSHSSSNSARSRHSARI) and 38–64 (ESGSSFDYSSSVRVTDSVGGDQPPRSD). One can recognise a GAF domain in the interval 218 to 401 (SMERLCDTMV…VFAIHVNKEL (184 aa)). Cys323 lines the phytochromobilin pocket. 2 consecutive PAS domains span residues 617 to 687 (VTSE…LQGK) and 750 to 821 (DYKA…VNLG). Residues 901-1117 (YLKKQIWNPL…SFIISVELAG (217 aa)) form the Histidine kinase domain.

This sequence belongs to the phytochrome family. In terms of assembly, homodimer. Post-translationally, contains one covalently linked phytochromobilin chromophore.

Regulatory photoreceptor which exists in two forms that are reversibly interconvertible by light: the Pr form that absorbs maximally in the red region of the spectrum and the Pfr form that absorbs maximally in the far-red region. Photoconversion of Pr to Pfr induces an array of morphogenic responses, whereas reconversion of Pfr to Pr cancels the induction of those responses. Pfr controls the expression of a number of nuclear genes including those encoding the small subunit of ribulose-bisphosphate carboxylase, chlorophyll A/B binding protein, protochlorophyllide reductase, rRNA, etc. It also controls the expression of its own gene(s) in a negative feedback fashion. This Populus tremuloides (Quaking aspen) protein is Phytochrome A (PHYA).